Consider the following 224-residue polypeptide: 2,5-diamino-6-ribosylamino-4(3H)-pyrimidinone 5'-phosphate reductase (224 aa).

Residues glycine 16, threonine 57, aspartate 61, serine 83–arginine 86, valine 134, and glycine 156–leucine 159 contribute to the NADP(+) site.

Belongs to the HTP reductase family. As to quaternary structure, homodimer.

It carries out the reaction 2,5-diamino-6-(1-D-ribitylamino)pyrimidin-4(3H)-one 5'-phosphate + NADP(+) = 2,5-diamino-6-(1-D-ribosylamino)pyrimidin-4(3H)-one 5'-phosphate + NADPH + H(+). The catalysed reaction is 2,5-diamino-6-(1-D-ribitylamino)pyrimidin-4(3H)-one 5'-phosphate + NAD(+) = 2,5-diamino-6-(1-D-ribosylamino)pyrimidin-4(3H)-one 5'-phosphate + NADH + H(+). It participates in cofactor biosynthesis; riboflavin biosynthesis. Functionally, catalyzes an early step in riboflavin biosynthesis, the NAD(P)H-dependent reduction of the ribose side chain of 2,5-diamino-6-ribosylamino-4(3H)-pyrimidinone 5'-phosphate, yielding 2,5-diamino-6-ribitylamino-4(3H)-pyrimidinone 5'-phosphate. The beta anomer is the authentic substrate, and the alpha anomer can serve as substrate subsequent to spontaneous anomerization. NADPH and NADH function equally well as the reductants. Does not catalyze the reduction of 5-amino-6-(5-phospho-D-ribosylamino)uracil to 5-amino-6-(5-phospho-D-ribitylamino)uracil. This chain is 2,5-diamino-6-ribosylamino-4(3H)-pyrimidinone 5'-phosphate reductase (arfC), found in Methanocaldococcus jannaschii (strain ATCC 43067 / DSM 2661 / JAL-1 / JCM 10045 / NBRC 100440) (Methanococcus jannaschii).